We begin with the raw amino-acid sequence, 387 residues long: Deoxyhypusine synthase (387 aa).

NAD(+) is bound by residues Ser108–Ser112, Ser134–Gly136, Glu140, and Asp257. Glu139–Glu140 is a binding site for spermidine. Residue Asp262 coordinates spermidine. Gly304 provides a ligand contact to NAD(+). Residue His309 coordinates spermidine. Position 329-330 (Thr329–Gly330) interacts with NAD(+). Spermidine is bound by residues Gly335–Asp337 and Glu344–Lys350. Residue Lys350 is the Nucleophile of the active site. NAD(+) is bound at residue Asp363–Val364.

It belongs to the deoxyhypusine synthase family. In terms of assembly, homotetramer. NAD(+) serves as cofactor.

The enzyme catalyses [eIF5A protein]-L-lysine + spermidine = [eIF5A protein]-deoxyhypusine + propane-1,3-diamine. It participates in protein modification; eIF5A hypusination. Catalyzes the NAD-dependent oxidative cleavage of spermidine and the subsequent transfer of the butylamine moiety of spermidine to the epsilon-amino group of a specific lysine residue of the eIF-5A precursor protein to form the intermediate deoxyhypusine residue. The polypeptide is Deoxyhypusine synthase (Saccharomyces cerevisiae (strain ATCC 204508 / S288c) (Baker's yeast)).